We begin with the raw amino-acid sequence, 284 residues long: Tryptophan synthase alpha chain (284 aa).

Residues E55 and D66 each act as proton acceptor in the active site.

The protein belongs to the TrpA family. In terms of assembly, tetramer of two alpha and two beta chains.

It catalyses the reaction (1S,2R)-1-C-(indol-3-yl)glycerol 3-phosphate + L-serine = D-glyceraldehyde 3-phosphate + L-tryptophan + H2O. Its pathway is amino-acid biosynthesis; L-tryptophan biosynthesis; L-tryptophan from chorismate: step 5/5. Its function is as follows. The alpha subunit is responsible for the aldol cleavage of indoleglycerol phosphate to indole and glyceraldehyde 3-phosphate. This Methanococcus voltae protein is Tryptophan synthase alpha chain.